The following is a 352-amino-acid chain: Phenylalanine--tRNA ligase alpha subunit (352 aa).

Glu-258 lines the Mg(2+) pocket.

It belongs to the class-II aminoacyl-tRNA synthetase family. Phe-tRNA synthetase alpha subunit type 1 subfamily. As to quaternary structure, tetramer of two alpha and two beta subunits. Requires Mg(2+) as cofactor.

Its subcellular location is the cytoplasm. It carries out the reaction tRNA(Phe) + L-phenylalanine + ATP = L-phenylalanyl-tRNA(Phe) + AMP + diphosphate + H(+). In Staphylococcus aureus (strain bovine RF122 / ET3-1), this protein is Phenylalanine--tRNA ligase alpha subunit.